The following is a 304-amino-acid chain: MEKDELTYHVPVLLKESVDGMNIHPDGTYVDVTFGGAGHSREILSRLGEGGRLLGFDQDEDAERNIVNDPHFTFVRSNFRYLQNFLRYHDIEQVDAILADLGVSSHHFDDSERGFSFRFDGALDMRMNKRAGLTAADIVNTYEEERLANIFYLYGELKNSRKLASAIVKARNGQSIRTIGEFLEIIKPLFGREREKKELAKVFQALRIEVNQEMEALKEMLAAATEALKPGGRLVVITYHSLEDRMVKNIMKTGNVEGKAETDFFGNLQTPFRLVNNKVIVPDEAEIERNPRSRSAKLRIAEKK.

S-adenosyl-L-methionine is bound by residues 37–39 (AGH), Asp57, Phe79, Asp100, and His107.

It belongs to the methyltransferase superfamily. RsmH family.

The protein resides in the cytoplasm. The catalysed reaction is cytidine(1402) in 16S rRNA + S-adenosyl-L-methionine = N(4)-methylcytidine(1402) in 16S rRNA + S-adenosyl-L-homocysteine + H(+). Functionally, specifically methylates the N4 position of cytidine in position 1402 (C1402) of 16S rRNA. This is Ribosomal RNA small subunit methyltransferase H from Bacteroides thetaiotaomicron (strain ATCC 29148 / DSM 2079 / JCM 5827 / CCUG 10774 / NCTC 10582 / VPI-5482 / E50).